Here is a 389-residue protein sequence, read N- to C-terminus: Urea transporter 1 (389 aa).

The next 5 membrane-spanning stretches (helical) occupy residues 53-73 (PVVL…VFVN), 91-110 (WWAL…ALLL), 116-136 (LIAS…MAVF), 143-163 (FWWL…FSSA), and 173-193 (LPVF…ATGH). A glycan (N-linked (GlcNAc...) asparagine) is linked at Asn-211. 4 helical membrane passes run 242–262 (GGIF…HAAI), 281–301 (IYFG…GGMF), 310–330 (LLAL…ANFM), and 333–353 (VGLP…LIMT).

Belongs to the urea transporter family. As to quaternary structure, homotrimer; each subunit contains a pore through which urea permeates. Identified in a complex with STOM. In terms of tissue distribution, detected in erythrocytes (at protein level). Expressed in spleen erythroblasts and tumoral kidney.

It is found in the cell membrane. Its subcellular location is the basolateral cell membrane. The catalysed reaction is urea(in) = urea(out). Inhibited by phloretin and para-chloromercuribenzene sulfonate. Mediates the transport of urea driven by a concentration gradient across the cell membrane of erythrocytes. Also mediates the transport of urea across the cell membrane of the renal inner medullary collecting duct which is critical to the urinary concentrating mechanism. Facilitates water transport in erythrocytes. This Homo sapiens (Human) protein is Urea transporter 1 (SLC14A1).